The sequence spans 268 residues: NADH-quinone oxidoreductase subunit B 1 (268 aa).

The [4Fe-4S] cluster site is built by cysteine 42, cysteine 43, cysteine 108, and cysteine 138.

Belongs to the complex I 20 kDa subunit family. In terms of assembly, NDH-1 is composed of 14 different subunits. Subunits NuoB, C, D, E, F, and G constitute the peripheral sector of the complex. Requires [4Fe-4S] cluster as cofactor.

Its subcellular location is the cell membrane. The catalysed reaction is a quinone + NADH + 5 H(+)(in) = a quinol + NAD(+) + 4 H(+)(out). In terms of biological role, NDH-1 shuttles electrons from NADH, via FMN and iron-sulfur (Fe-S) centers, to quinones in the respiratory chain. The immediate electron acceptor for the enzyme in this species is believed to be ubiquinone. Couples the redox reaction to proton translocation (for every two electrons transferred, four hydrogen ions are translocated across the cytoplasmic membrane), and thus conserves the redox energy in a proton gradient. This chain is NADH-quinone oxidoreductase subunit B 1, found in Roseiflexus sp. (strain RS-1).